Consider the following 336-residue polypeptide: WAT1-related protein At2g37450 (336 aa).

9 consecutive transmembrane segments (helical) span residues 7–27, 45–65, 79–99, 115–135, 160–180, 189–209, 227–247, 255–275, and 279–299; these read ALPF…DILT, HGVA…PVIA, TFAI…ALIF, VVGT…KGPA, GAVL…LQAI, LSLA…VALV, LTIT…GGVV, FVTA…SIIF, and MYLG…LVIW. EamA domains lie at 63–126 and 169–298; these read VIAQ…GGIM and FSYA…YLVI.

It belongs to the drug/metabolite transporter (DMT) superfamily. Plant drug/metabolite exporter (P-DME) (TC 2.A.7.4) family.

Its subcellular location is the membrane. This Arabidopsis thaliana (Mouse-ear cress) protein is WAT1-related protein At2g37450.